The sequence spans 2167 residues: RNA editing associated helicase 2 (2167 aa).

The transit peptide at 1-30 (MRAIRLTVACRYLGPFRSVTLSPVVLPVRL) directs the protein to the mitochondrion. 2 disordered regions span residues 503–593 (RARG…DEAT) and 937–969 (ENATKPPHTPTPLPLTLGTTQEKPQYPTPPTNV). Residues 532–541 (SSTQTPSSST) are compositionally biased toward low complexity. Residues 1024-1095 (DAKTVLQRYC…AMHALALLRR (72 aa)) enclose the DRBM domain. Residues 1348–1513 (LRAISSNQIV…FGNAPIINVE (166 aa)) form the Helicase ATP-binding domain. 1361 to 1368 (GTTGCGKT) is a binding site for ATP. The short motif at 1366 to 1367 (GK) is the Important for binding to gRNA element. Positions 1460–1463 (DEIH) match the DEAH box motif. Residues 1585–1762 (AIDHAVRSLD…SLCLQILALD (178 aa)) form the Helicase C-terminal domain. The segment at 2132–2167 (IIEPCTEPKGGSSEAEKTHVNSSHTPTTSAEAGGDS) is disordered. A compositionally biased stretch (polar residues) spans 2151 to 2161 (VNSSHTPTTSA).

This sequence belongs to the DEAD box helicase family. DEAH subfamily. As to quaternary structure, component of the REH2-associated complex (REH2C) composed of helicase REH2, associated factors H2F1 and H2F2, and mRNAs at various editing stages; the formation of the complex is RNA-independent. Within the complex, interacts with H2F1; the interaction is direct. Interacts transiently, in a RNA-dependent manner, with various editing complexes including the RNA editing core (RECC) complex, the gRNA-binding (GRBC) complex (also known as the MRB1 complex) and the RNA editing mediator (REMC) complex. Interacts with GAP1/GRBC2 via RNA forming a variant of the GRBC complex known as REH2-GRBC complex. Interacts with mitochondrial ribosomes.

Its subcellular location is the mitochondrion. The enzyme catalyses ATP + H2O = ADP + phosphate + H(+). Its function is as follows. ATP-dependent RNA helicase that unwinds RNA in a 3' to 5' direction and that plays an important role in mitochondrial mRNA editing, a process involving the addition and deletion of uridine (U) nucleotides in the pre-mRNA. As part of the RET2-containing gRNA-binding (RET2-GRBC) complex, acts as a scaffold for the assembly of mRNA-gRNA hybrids and the recruitment of the RNA editing core (RECC) complex. Regulates several steps of mRNA editing by the MRBC3010/GRBC6 containing gRNA-binding (MRBC3010-GRBC) complex including loading of unedited mRNA, editing in the first sequence block and subsequent editing progression across multiple sequence blocks. Also, regulates the RNA substrate content of the MRBC3010-GRBC complex as well as the association of this complex with mitoribosomes. This Trypanosoma brucei brucei (strain 927/4 GUTat10.1) protein is RNA editing associated helicase 2.